Here is a 374-residue protein sequence, read N- to C-terminus: tRNA-specific 2-thiouridylase MnmA (374 aa).

Residues 10–17 (AMSGGVDS) and Leu36 each bind ATP. Residue Cys111 is the Nucleophile of the active site. Cysteines 111 and 209 form a disulfide. An ATP-binding site is contributed by Gly135. The interaction with tRNA stretch occupies residues 159–161 (KDQ). Catalysis depends on Cys209, which acts as the Cysteine persulfide intermediate.

It belongs to the MnmA/TRMU family.

It localises to the cytoplasm. It carries out the reaction S-sulfanyl-L-cysteinyl-[protein] + uridine(34) in tRNA + AH2 + ATP = 2-thiouridine(34) in tRNA + L-cysteinyl-[protein] + A + AMP + diphosphate + H(+). Its function is as follows. Catalyzes the 2-thiolation of uridine at the wobble position (U34) of tRNA, leading to the formation of s(2)U34. This Acidobacterium capsulatum (strain ATCC 51196 / DSM 11244 / BCRC 80197 / JCM 7670 / NBRC 15755 / NCIMB 13165 / 161) protein is tRNA-specific 2-thiouridylase MnmA.